The primary structure comprises 180 residues: ATP synthase subunit delta (180 aa).

The protein belongs to the ATPase delta chain family. As to quaternary structure, F-type ATPases have 2 components, F(1) - the catalytic core - and F(0) - the membrane proton channel. F(1) has five subunits: alpha(3), beta(3), gamma(1), delta(1), epsilon(1). F(0) has three main subunits: a(1), b(2) and c(10-14). The alpha and beta chains form an alternating ring which encloses part of the gamma chain. F(1) is attached to F(0) by a central stalk formed by the gamma and epsilon chains, while a peripheral stalk is formed by the delta and b chains.

The protein localises to the cell membrane. Its function is as follows. F(1)F(0) ATP synthase produces ATP from ADP in the presence of a proton or sodium gradient. F-type ATPases consist of two structural domains, F(1) containing the extramembraneous catalytic core and F(0) containing the membrane proton channel, linked together by a central stalk and a peripheral stalk. During catalysis, ATP synthesis in the catalytic domain of F(1) is coupled via a rotary mechanism of the central stalk subunits to proton translocation. Functionally, this protein is part of the stalk that links CF(0) to CF(1). It either transmits conformational changes from CF(0) to CF(1) or is implicated in proton conduction. The protein is ATP synthase subunit delta of Limosilactobacillus reuteri (strain DSM 20016) (Lactobacillus reuteri).